Reading from the N-terminus, the 201-residue chain is MMGRVPDGPTGLAALVPSVEEAQAMLPPRRLRLLLSIAAVVLTLDIVTKVLAVKFLLPGKSVSIIGDTVTWTLVRNSGAAFSMATGYTWVLTLIATGVVIGIFWMGRRLVSSWWALGLGMILGGAMGNLVDRFFRAPAPLRGHVVDFLSIGWWPVFNVADPSVVVGAILLVVLSIFGFDFDTVGRRKAEFDIAGQRKAEQR.

3 consecutive transmembrane segments (helical) span residues 33–53, 86–106, and 110–130; these read LLLS…VLAV, GYTW…FWMG, and VSSW…GNLV. Active-site residues include aspartate 146 and aspartate 160. The helical transmembrane segment at 158–178 threads the bilayer; it reads VADPSVVVGAILLVVLSIFGF.

The protein belongs to the peptidase A8 family.

The protein localises to the cell membrane. It carries out the reaction Release of signal peptides from bacterial membrane prolipoproteins. Hydrolyzes -Xaa-Yaa-Zaa-|-(S,diacylglyceryl)Cys-, in which Xaa is hydrophobic (preferably Leu), and Yaa (Ala or Ser) and Zaa (Gly or Ala) have small, neutral side chains.. It participates in protein modification; lipoprotein biosynthesis (signal peptide cleavage). Its function is as follows. This protein specifically catalyzes the removal of signal peptides from prolipoproteins. This is Lipoprotein signal peptidase from Mycobacterium leprae (strain Br4923).